The primary structure comprises 465 residues: Probable Xaa-Pro aminopeptidase pepP (465 aa).

Residues Asp263, Asp274, Glu397, and Glu437 each coordinate Mn(2+).

This sequence belongs to the peptidase M24B family. Requires Mn(2+) as cofactor.

The catalysed reaction is Release of any N-terminal amino acid, including proline, that is linked to proline, even from a dipeptide or tripeptide.. Functionally, catalyzes the removal of a penultimate prolyl residue from the N-termini of peptides. This chain is Probable Xaa-Pro aminopeptidase pepP (pepP), found in Emericella nidulans (strain FGSC A4 / ATCC 38163 / CBS 112.46 / NRRL 194 / M139) (Aspergillus nidulans).